The sequence spans 355 residues: Heat-inducible transcription repressor HrcA (355 aa).

The protein belongs to the HrcA family.

Functionally, negative regulator of class I heat shock genes (grpE-dnaK-dnaJ and groELS operons). Prevents heat-shock induction of these operons. This chain is Heat-inducible transcription repressor HrcA, found in Nitratidesulfovibrio vulgaris (strain DSM 19637 / Miyazaki F) (Desulfovibrio vulgaris).